Here is a 1819-residue protein sequence, read N- to C-terminus: Non-reducing polyketide synthase nscA (1819 aa).

The N-terminal acylcarrier protein transacylase domain (SAT) stretch occupies residues 25–277; it reads RRLDQHSKDR…PLPVYDGLCH (253 aa). In terms of domain architecture, Ketosynthase family 3 (KS3) spans 413–846; sequence SSKLAIVGMA…GGNTTLLLED (434 aa). Active-site for beta-ketoacyl synthase activity residues include Cys-586, His-721, and His-764. Residues 952–1249 are malonyl-CoA:ACP transacylase (MAT) domain; sequence FTSQGAYYHG…MIPSAPAMSS (298 aa). Residues 1339–1658 are product template (PT) domain; it reads TSLVHQITAE…RLLMDRFFSP (320 aa). The tract at residues 1343-1479 is N-terminal hotdog fold; the sequence is HQITAETVEA…AMIRFEDPMA (137 aa). A PKS/mFAS DH domain is found at 1343–1653; it reads HQITAETVEA…IRRVPRLLMD (311 aa). The Proton acceptor; for dehydratase activity role is filled by His-1375. The segment at 1507 to 1653 is C-terminal hotdog fold; that stretch reads ASRLSKPLAY…IRRVPRLLMD (147 aa). Asp-1564 (proton donor; for dehydratase activity) is an active-site residue. The segment at 1703-1742 is disordered; the sequence is SSTMASKAPEPAPLLATSSESSTPKESPIVTPAESEREDP. Residues 1719-1730 are compositionally biased toward low complexity; the sequence is TSSESSTPKESP. Residues 1742–1819 enclose the Carrier domain; it reads PVDNNMISQC…EMTAWIEEYC (78 aa). Ser-1779 is subject to O-(pantetheine 4'-phosphoryl)serine.

It depends on pantetheine 4'-phosphate as a cofactor.

It functions in the pathway secondary metabolite biosynthesis. Non-reducing polyketide synthase; part of the gene cluster that mediates the biosynthesis of neosartoricin B, a prenylated anthracenone that probably exhibits T-cell antiproliferative activity, suggestive of a physiological role as an immunosuppressive agent. The non-reducing polyketide synthase nscA probably synthesizes and cyclizes the decaketide backbone. The hydrolase nscB then mediates the product release through hydrolysis followed by spontaneous decarboxylation. The prenyltransferase nscD catalyzes the addition of the dimethylallyl group to the aromatic C5. The FAD-dependent monooxygenase nscC is then responsible for the stereospecific hydroxylation at C2. Neosartoricin B can be converted into two additional compounds neosartoricins C and D. Neosartoricin C is a spirocyclic compound that is cyclized through the attack of C3 hydroxyl on C14, followed by dehydration. On the other hand, neosartoricin D is a further cyclized compound in which attack of C2 on C14 in neosartoricin C results in the formation of the acetal-containing dioxabicyclo-octanone ring. Both of these compounds are novel and possibly represent related metabolites of the gene cluster. The chain is Non-reducing polyketide synthase nscA from Trichophyton verrucosum (strain HKI 0517).